Here is a 541-residue protein sequence, read N- to C-terminus: Protein yellow (541 aa).

A signal peptide spans 1-21; the sequence is MFQDKGWILVTLITLVTPSWA. N-linked (GlcNAc...) asparagine glycans are attached at residues N144 and N215. The tract at residues 443 to 463 is disordered; sequence QKPQTSWASSPPPPSRTYLPA.

This sequence belongs to the major royal jelly protein family.

It is found in the secreted. Functionally, controls the pigmentation pattern of the adult cuticle and larval mouth parts. This chain is Protein yellow (y), found in Drosophila melanogaster (Fruit fly).